Reading from the N-terminus, the 250-residue chain is Ribonuclease 3 (250 aa).

Basic residues predominate over residues 1-15 (MTKTPAKKKRARSSK). Residues 1–21 (MTKTPAKKKRARSSKAKGTDA) are disordered. In terms of domain architecture, RNase III spans 22 to 150 (NAALEARIGH…VIGAIFLDGG (129 aa)). Glu63 contacts Mg(2+). The active site involves Asp67. Residues Asp136 and Glu139 each contribute to the Mg(2+) site. Glu139 is an active-site residue. One can recognise a DRBM domain in the interval 175-244 (DPKTVLQEWA…ASVMIEREGV (70 aa)).

It belongs to the ribonuclease III family. In terms of assembly, homodimer. It depends on Mg(2+) as a cofactor.

Its subcellular location is the cytoplasm. The catalysed reaction is Endonucleolytic cleavage to 5'-phosphomonoester.. Its function is as follows. Digests double-stranded RNA. Involved in the processing of primary rRNA transcript to yield the immediate precursors to the large and small rRNAs (23S and 16S). Processes some mRNAs, and tRNAs when they are encoded in the rRNA operon. Processes pre-crRNA and tracrRNA of type II CRISPR loci if present in the organism. In Bradyrhizobium diazoefficiens (strain JCM 10833 / BCRC 13528 / IAM 13628 / NBRC 14792 / USDA 110), this protein is Ribonuclease 3.